The primary structure comprises 350 residues: Solute carrier family 35 member E4 (350 aa).

8 helical membrane passes run 40-60, 79-99, 110-130, 135-155, 218-238, 258-278, 279-299, and 301-321; these read VLGQ…LLAG, PLLL…WGAQ, VLLL…GLST, LAQL…ALLL, VTLL…AALV, VLLS…LLAL, TSAL…LILS, and LLFG…TLSG. The region spanning 125-179 is the EamA domain; that stretch reads NVGLSTVPLDLAQLATTTTPLFTLALSALLLGRRHHPLQFAAMGPLCLGAACSLA.

It belongs to the TPT transporter family. SLC35E subfamily.

The protein resides in the membrane. In terms of biological role, putative transporter. In Rattus norvegicus (Rat), this protein is Solute carrier family 35 member E4 (Slc35e4).